The primary structure comprises 239 residues: Ribosomal RNA small subunit methyltransferase G (239 aa).

Residues G77, F82, 128 to 129 (AE), and R147 each bind S-adenosyl-L-methionine. A disordered region spans residues 216–239 (KKQSQTPKKFPRKPGTPNKSPIEG).

It belongs to the methyltransferase superfamily. RNA methyltransferase RsmG family.

It localises to the cytoplasm. Functionally, specifically methylates the N7 position of guanine in position 535 of 16S rRNA. The polypeptide is Ribosomal RNA small subunit methyltransferase G (Bacillus licheniformis (strain ATCC 14580 / DSM 13 / JCM 2505 / CCUG 7422 / NBRC 12200 / NCIMB 9375 / NCTC 10341 / NRRL NRS-1264 / Gibson 46)).